The chain runs to 255 residues: Ribonuclease HII (255 aa).

In terms of domain architecture, RNase H type-2 spans 72 to 255 (QYIAGIDEAG…RSFAPVKAHE (184 aa)). Positions 78, 79, and 170 each coordinate a divalent metal cation.

The protein belongs to the RNase HII family. Mn(2+) is required as a cofactor. The cofactor is Mg(2+).

The protein resides in the cytoplasm. It catalyses the reaction Endonucleolytic cleavage to 5'-phosphomonoester.. In terms of biological role, endonuclease that specifically degrades the RNA of RNA-DNA hybrids. This is Ribonuclease HII from Bacillus licheniformis (strain ATCC 14580 / DSM 13 / JCM 2505 / CCUG 7422 / NBRC 12200 / NCIMB 9375 / NCTC 10341 / NRRL NRS-1264 / Gibson 46).